The primary structure comprises 202 residues: Probable nicotinate-nucleotide adenylyltransferase (202 aa).

It belongs to the NadD family.

It catalyses the reaction nicotinate beta-D-ribonucleotide + ATP + H(+) = deamido-NAD(+) + diphosphate. Its pathway is cofactor biosynthesis; NAD(+) biosynthesis; deamido-NAD(+) from nicotinate D-ribonucleotide: step 1/1. Functionally, catalyzes the reversible adenylation of nicotinate mononucleotide (NaMN) to nicotinic acid adenine dinucleotide (NaAD). The polypeptide is Probable nicotinate-nucleotide adenylyltransferase (Bacteroides thetaiotaomicron (strain ATCC 29148 / DSM 2079 / JCM 5827 / CCUG 10774 / NCTC 10582 / VPI-5482 / E50)).